We begin with the raw amino-acid sequence, 215 residues long: Probable nicotinate-nucleotide adenylyltransferase (215 aa).

The protein belongs to the NadD family.

It carries out the reaction nicotinate beta-D-ribonucleotide + ATP + H(+) = deamido-NAD(+) + diphosphate. The protein operates within cofactor biosynthesis; NAD(+) biosynthesis; deamido-NAD(+) from nicotinate D-ribonucleotide: step 1/1. Functionally, catalyzes the reversible adenylation of nicotinate mononucleotide (NaMN) to nicotinic acid adenine dinucleotide (NaAD). This Coxiella burnetii (strain RSA 331 / Henzerling II) protein is Probable nicotinate-nucleotide adenylyltransferase.